The primary structure comprises 380 residues: Homoserine O-acetyltransferase (380 aa).

One can recognise an AB hydrolase-1 domain in the interval 70–366 (NAVLVFHALT…SPHGHDAFLI (297 aa)). The active-site Nucleophile is serine 186. Arginine 250 provides a ligand contact to substrate. Catalysis depends on residues aspartate 333 and histidine 361. Position 362 (aspartate 362) interacts with substrate.

This sequence belongs to the AB hydrolase superfamily. MetX family. As to quaternary structure, homodimer.

The protein localises to the cytoplasm. It carries out the reaction L-homoserine + acetyl-CoA = O-acetyl-L-homoserine + CoA. It functions in the pathway amino-acid biosynthesis; L-methionine biosynthesis via de novo pathway; O-acetyl-L-homoserine from L-homoserine: step 1/1. Its function is as follows. Transfers an acetyl group from acetyl-CoA to L-homoserine, forming acetyl-L-homoserine. In Thermus thermophilus (strain ATCC BAA-163 / DSM 7039 / HB27), this protein is Homoserine O-acetyltransferase.